A 723-amino-acid chain; its full sequence is Methionine--tRNA ligase (723 aa).

Residues 11–21 (PYANGPIHAGH) carry the 'HIGH' region motif. Zn(2+)-binding residues include C143, C146, C156, and C159. The 'KMSKS' region signature appears at 344–348 (KFSTS). T347 provides a ligand contact to ATP. Positions 623–723 (DFAKLDLRVG…KEVKLGAKVR (101 aa)) constitute a tRNA-binding domain.

Belongs to the class-I aminoacyl-tRNA synthetase family. MetG type 1 subfamily. Homodimer. Zn(2+) is required as a cofactor.

The protein localises to the cytoplasm. The enzyme catalyses tRNA(Met) + L-methionine + ATP = L-methionyl-tRNA(Met) + AMP + diphosphate. In terms of biological role, is required not only for elongation of protein synthesis but also for the initiation of all mRNA translation through initiator tRNA(fMet) aminoacylation. The sequence is that of Methionine--tRNA ligase from Pyrococcus horikoshii (strain ATCC 700860 / DSM 12428 / JCM 9974 / NBRC 100139 / OT-3).